A 575-amino-acid chain; its full sequence is Sulfite reductase [NADPH] hemoprotein beta-component (575 aa).

Residues cysteine 439, cysteine 445, cysteine 484, and cysteine 488 each contribute to the [4Fe-4S] cluster site. Residue cysteine 488 participates in siroheme binding.

It belongs to the nitrite and sulfite reductase 4Fe-4S domain family. In terms of assembly, alpha(8)-beta(8). The alpha component is a flavoprotein, the beta component is a hemoprotein. Requires siroheme as cofactor. [4Fe-4S] cluster is required as a cofactor.

It carries out the reaction hydrogen sulfide + 3 NADP(+) + 3 H2O = sulfite + 3 NADPH + 4 H(+). Its pathway is sulfur metabolism; hydrogen sulfide biosynthesis; hydrogen sulfide from sulfite (NADPH route): step 1/1. Functionally, component of the sulfite reductase complex that catalyzes the 6-electron reduction of sulfite to sulfide. This is one of several activities required for the biosynthesis of L-cysteine from sulfate. The sequence is that of Sulfite reductase [NADPH] hemoprotein beta-component from Blochmanniella pennsylvanica (strain BPEN).